Consider the following 351-residue polypeptide: Phosphate acyltransferase (351 aa).

It belongs to the PlsX family. Homodimer. Probably interacts with PlsY.

The protein localises to the cytoplasm. The catalysed reaction is a fatty acyl-[ACP] + phosphate = an acyl phosphate + holo-[ACP]. Its pathway is lipid metabolism; phospholipid metabolism. In terms of biological role, catalyzes the reversible formation of acyl-phosphate (acyl-PO(4)) from acyl-[acyl-carrier-protein] (acyl-ACP). This enzyme utilizes acyl-ACP as fatty acyl donor, but not acyl-CoA. The polypeptide is Phosphate acyltransferase (Neisseria meningitidis serogroup C / serotype 2a (strain ATCC 700532 / DSM 15464 / FAM18)).